The following is a 315-amino-acid chain: Type II restriction enzyme AvaI (315 aa).

It catalyses the reaction Endonucleolytic cleavage of DNA to give specific double-stranded fragments with terminal 5'-phosphates.. Functionally, a P subtype restriction enzyme that recognizes the double-stranded sequence 5'-CYCGRG-3' and cleaves after C-1. The chain is Type II restriction enzyme AvaI from Anabaena variabilis.